We begin with the raw amino-acid sequence, 500 residues long: Protein DML1 (500 aa).

The protein belongs to the misato family.

Its subcellular location is the mitochondrion. In terms of biological role, involved in the partitioning of the mitochondrial organelle and mitochondrial DNA (mtDNA) inheritance. The polypeptide is Protein DML1 (DML1) (Scheffersomyces stipitis (strain ATCC 58785 / CBS 6054 / NBRC 10063 / NRRL Y-11545) (Yeast)).